Reading from the N-terminus, the 996-residue chain is MAAIMIGSISVPIVESARCATVQTGNRVNIVAPGHVAVCKPQMKSHSYYKHASEKLSKQASESINILNSFFDTDPEMRFRLTRNEMSKVKKGPNGRMILRKPRAQRVLERISFEKIEKGAERQVLPWRVYATVTSIINTFTDERNGIANSSLRSPFYKRSCRKEKKKIVCENVVRSASVNNLCDRVLKIAREKNIPVEMIGKKKNRHTLTFKNFKGSFIGKVSLAHERGQMRHVEMSYEQFGFILQAICRVTNTRCVRDEDIKPGCSGWVLGDDHELTQKFSRLPCLVIRGRDDEGIVNALEPVFFYDDVDHYSSQPEVQFFQGWRRMFDNFKPSSDHVCKVDHGNEECGELAAIFSQALFPVVKLSCQTCREKLSRVSFEEFKDSLAINFTVHKSEWDSLKENPHHDNVLKLIKGATQATQNLKLSSEVMKLVQNHTSTHMKQIQDINRALMKGSLVTQDELDLALKQLLEMTQWFKNHMHLTGEEALKTFRNKRSSKAMINPSLLCDNQLDKNGNFVWGERGYHSKRLFKNFFEEVIPSEGYTKYIVRNFPNGTRKLAIGSLIVPLNLDRARTALLGESIEKEPLTSACVSQQNGNYIHSCCCVTMDDGTPMYSDVKSPTKRHLVIGASGDPKYIDLPASEADRMYIAKEGYCYLNIFLAMLVNVNENEAKDFTKMIRDVLIPMLGQWPSLMDVATAAYILGVFHPETRCAELPRILVDHATQTMHVIDSYGSLTVGYHVLKAGTVNHLIQFASNDLQSEMKHYRVGGTPTQRIKLEEQLIKGIFKPKLMMQLLQDDPYVLILGMVSPTILVHMYRMRHFERGIEMWIKRDHEVGKIFVILEQLTRKVALTEVLVDQLDLISEASPHLLEIMKGCQDNQRAYVPALDLLTVQVEREFSNKELKVNGYPDLQQTLYDMREKNICKAIARFMARAKLAGKIMCNRAIEAILDFYGEKIDPASKRRKARIFAAICSRVLYHDPSTCKEHSRCRHAQI.

One can recognise a Peptidase S30 domain in the interval 173 to 313 (VVRSASVNNL…VFFYDDVDHY (141 aa)). Catalysis depends on for P1 proteinase activity residues H226, E235, and S267. An Involved in interaction with stylet and aphid transmission motif is present at residues 365 to 368 (KLSC). The Involved in virions binding and aphid transmission motif lies at 621–623 (PTK). One can recognise a Peptidase C6 domain in the interval 647-769 (MYIAKEGYCY…QSEMKHYRVG (123 aa)). Catalysis depends on for helper component proteinase activity residues C655 and H728.

This sequence belongs to the potyviridae P3N-PIPO polyprotein family. As to quaternary structure, interacts (via PIPO domain) with host PCaP1 protein; this interaction may help to anchor the movement complex to the plasma membrane from which the complex could move to the plasmodesmata. Post-translationally, potyviral RNA is expressed as two polyproteins which undergo post-translational proteolytic processing. Genome polyprotein is processed by NIa-pro, P1 and HC-pro proteinases resulting in the production of at least ten individual proteins. P3N-PIPO is cleaved by P1 and HC-pro proteinases resulting in the production of three individual proteins. The P1 proteinase and the HC-pro cleave only their respective C-termini autocatalytically.

It is found in the host cell junction. The protein resides in the host plasmodesma. The enzyme catalyses Hydrolyzes a Gly-|-Gly bond at its own C-terminus, commonly in the sequence -Tyr-Xaa-Val-Gly-|-Gly, in the processing of the potyviral polyprotein.. Required for aphid transmission and also has proteolytic activity. Only cleaves a Gly-Gly dipeptide at its own C-terminus. Interacts with virions and aphid stylets. Acts as a suppressor of RNA-mediated gene silencing, also known as post-transcriptional gene silencing (PTGS), a mechanism of plant viral defense that limits the accumulation of viral RNAs. May have RNA-binding activity. Functionally, allows efficient cell to cell propagation, by bypassing the host cell wall barrier. Transports viral genome to neighboring plant cells directly through plasmosdesmata, without any budding. In Zucchini yellow mosaic virus (strain Reunion Island) (ZYMV), this protein is P3N-PIPO polyprotein.